The chain runs to 468 residues: RUS family member 1 (468 aa).

Ala-2 carries the post-translational modification N-acetylalanine. A Phosphothreonine modification is found at Thr-49. Residues 247–267 (LLMLPLVSGCPGFSLGCFFFL) form a helical membrane-spanning segment.

Belongs to the RUS1 family.

The protein localises to the membrane. The polypeptide is RUS family member 1 (Homo sapiens (Human)).